The chain runs to 303 residues: Pseudouridine-5'-phosphate glycosidase (303 aa).

Glu25 functions as the Proton donor in the catalytic mechanism. Lys87 and Val107 together coordinate substrate. Asp139 provides a ligand contact to Mn(2+). Residue 141–143 (SAD) participates in substrate binding. Residue Lys160 is the Nucleophile of the active site.

Belongs to the pseudouridine-5'-phosphate glycosidase family. In terms of assembly, homotrimer. Mn(2+) is required as a cofactor.

It carries out the reaction D-ribose 5-phosphate + uracil = psi-UMP + H2O. Functionally, catalyzes the reversible cleavage of pseudouridine 5'-phosphate (PsiMP) to ribose 5-phosphate and uracil. Functions biologically in the cleavage direction, as part of a pseudouridine degradation pathway. This Hahella chejuensis (strain KCTC 2396) protein is Pseudouridine-5'-phosphate glycosidase.